The sequence spans 2828 residues: Matrix-remodeling-associated protein 5 (2828 aa).

A signal peptide spans 1-26 (MPKRAHWGALSVVLILLWGHPRVALA). Positions 27–55 (CPHPCACYVPSEVHCTFRSLASVPAGIAK) constitute an LRRNT domain. 6 LRR repeats span residues 56-77 (HVERINLGFNSIQALSETSFAG), 80-101 (KLELLMIHGNEIPSIPDGALRD), 104-125 (SLQVFKFSYNKLRVITGQTLQG), 128-149 (NLMRLHIDHNKIEFIHPQAFNG), 152-173 (SLRLLHLEGNLLHQLHPSTFST), and 184-205 (TIRHLYLAENMVRTLPASMLRN). The region spanning 217-277 (NPWTCDCEMR…HKLKDMTCLK (61 aa)) is the LRRCT domain. N-linked (GlcNAc...) asparagine glycans are attached at residues asparagine 287 and asparagine 321. Ig-like C2-type domains follow at residues 481-571 (PSGA…YRVL) and 575-669 (PSTQ…ITVT). 2 cysteine pairs are disulfide-bonded: cysteine 501/cysteine 555 and cysteine 599/cysteine 651. An N-linked (GlcNAc...) asparagine glycan is attached at asparagine 633. Disordered stretches follow at residues 671–715 (KGSG…RRLL), 933–962 (KPTHEETATEGWSAADVGSSPEPTSSEYEP), 1068–1190 (QGGN…APDI), 1204–1275 (AWVD…SSET), and 1367–1389 (EESSPVGFPGTPTWNPSRTAQPG). Acidic residues predominate over residues 695–708 (IVEDEGGSGMGDEE). Serine 702 carries O-linked (Xyl...) (chondroitin sulfate) serine glycosylation. Low complexity predominate over residues 951 to 962 (SSPEPTSSEYEP). Positions 1090 to 1107 (SKSITLPDSTLGIMSSMS) are enriched in polar residues. Basic residues predominate over residues 1146-1168 (PSRRRPNGRRRLRPNKFRHRHKQ). Composition is skewed to polar residues over residues 1169 to 1190 (TPPTTFAPSETFSTQPTQAPDI) and 1204 to 1214 (AWVDNTVNTPK). Residues 1229-1243 (TPRRKHGKRPNKHRY) are compositionally biased toward basic residues. Asparagine 1403 carries an N-linked (GlcNAc...) asparagine glycan. An LRR 7 repeat occupies 1410–1434 (LKELEDVDFTSEFLSSLTVSTPFHQ). Disordered regions lie at residues 1479 to 1499 (QNHTPTAARMKEPASSSPSTI), 1536 to 1566 (NPETEATPVNNEGTQHMSGPNELSTPSSDQD), 1579 to 1603 (QVFGSRSLPRGPDSQRQDGRVHASH), 1669 to 1689 (STTIPLPLHMSKPSIPSKFTD), and 1700 to 1719 (KVFGNNNIPEARNPVGKPPS). Residues 1542 to 1566 (TPVNNEGTQHMSGPNELSTPSSDQD) are compositionally biased toward polar residues. A glycan (N-linked (GlcNAc...) asparagine) is linked at asparagine 1735. Ig-like C2-type domains follow at residues 1853-1946 (PQIL…LSVT), 1950-2041 (PQIL…IRLH), 2046-2140 (PPVI…LNVQ), 2146-2239 (ARIT…VDVV), 2242-2343 (PAKI…KVVT), 2345-2432 (PATI…KTVW), 2440-2534 (PKIN…LQLT), 2542-2630 (PIFH…RLVS), 2637-2722 (PEAN…PSVT), and 2733-2828 (PRIT…IHVF). Intrachain disulfides connect cysteine 1875–cysteine 1928 and cysteine 1972–cysteine 2025. 2 N-linked (GlcNAc...) asparagine glycosylation sites follow: asparagine 2007 and asparagine 2056. Cystine bridges form between cysteine 2069–cysteine 2122, cysteine 2168–cysteine 2221, cysteine 2265–cysteine 2324, cysteine 2368–cysteine 2418, cysteine 2466–cysteine 2518, cysteine 2564–cysteine 2616, cysteine 2659–cysteine 2711, and cysteine 2755–cysteine 2810. A glycan (N-linked (GlcNAc...) asparagine) is linked at asparagine 2693.

Detected in placenta (at protein level). Detected in cerebrospinal fluid and fibroblasts (at protein level). Highly expressed in kidney, also detected on liver and spleen. Expressed by proximal tubular cells of the kidney (at protein level). Expression highly increases during chronic kidney disease and autosomal dominant polycystic kidney disease, where is detected in cysts.

It localises to the secreted. In terms of biological role, in kidney, has anti-inflammatory and anti-fibrotic properties by limiting the induction of chemokines, fibronectin and collagen expression in response to TGB1 and pro-inflammatory stimuli. This is Matrix-remodeling-associated protein 5 (MXRA5) from Homo sapiens (Human).